We begin with the raw amino-acid sequence, 71 residues long: Small ribosomal subunit protein bS21 (71 aa).

This sequence belongs to the bacterial ribosomal protein bS21 family.

In Alteromonas mediterranea (strain DSM 17117 / CIP 110805 / LMG 28347 / Deep ecotype), this protein is Small ribosomal subunit protein bS21.